The chain runs to 432 residues: uncharacterized protein (432 aa).

Disordered regions lie at residues 37–61 (DGIGGAVGRDGDSLDNDGDSSSADC), 127–151 (RDHDVDSGGRDSNSKVKRKSDDTRY), and 298–378 (SVSS…NHQC). Over residues 312–335 (DSSTLANTQGFREDQSQQQHTPSP) the composition is skewed to polar residues. Over residues 341 to 366 (SSLSHQFHQSIHQSHQHHQSIYQSQH) the composition is skewed to low complexity.

This is an uncharacterized protein from Arabidopsis thaliana (Mouse-ear cress).